Here is a 359-residue protein sequence, read N- to C-terminus: Protein LpfD (359 aa).

The first 24 residues, 1–24 (MLKKLIMFTGLLGGSVLFSGQALA), serve as a signal peptide directing secretion.

The protein belongs to the fimbrial protein family.

It is found in the fimbrium. In Salmonella typhimurium (strain LT2 / SGSC1412 / ATCC 700720), this protein is Protein LpfD (lpfD).